We begin with the raw amino-acid sequence, 30 residues long: Poly-His-poly-Gly peptide 2 (30 aa).

Basic residues predominate over residues 1–18 (EDDHDHHHHHHHHHHHHG). Residues 1–30 (EDDHDHHHHHHHHHHHHGVGGGGGGGGGGA) form a disordered region. Residues 19–30 (VGGGGGGGGGGA) show a composition bias toward gly residues.

As to expression, expressed by the venom gland.

The protein localises to the secreted. Its function is as follows. May serve as a metalloproteinase inhibitor during glandular storage. Their inhibition may be instantly disengaged, by dilution or physiochemical change, when venom is injected into tissue of the victim. The chain is Poly-His-poly-Gly peptide 2 from Atheris nitschei (Great lakes bush viper).